The chain runs to 264 residues: MSGHSKWATTKHKKAAIDAKRGKLFARLIKNIEVAARLGGGDPSGNPTLYDAIQKAKKSSVPNDNITRAVKRGSGEGADAVNYETIMYEAYGPAGVAILIECLTDNRNRAVSDVRVAVTRNGGTMADGGSVQRLFQRKGVVSVSKTYEVEEGRKTETREVDEDQLMEATIDAEPEDIVDEGEVFEIISDPSAVVDVRKAVQGAGIDYDSAEVSFKPDFTQRVELEDARKLYRILDALEDLDDVQNVFSNVDIPAEVAAALDEEE.

This sequence belongs to the TACO1 family.

The protein resides in the cytoplasm. This chain is Probable transcriptional regulatory protein PPA1157, found in Cutibacterium acnes (strain DSM 16379 / KPA171202) (Propionibacterium acnes).